The sequence spans 566 residues: Cytokine-like nuclear factor N-PAC (566 aa).

The region spanning 9 to 70 is the PWWP domain; that stretch reads VNDLVWAKMK…ETQIKPYLQF (62 aa). Disordered stretches follow at residues 127–147 and 206–234; these read VASG…NTTT and MLDD…SSLD. The segment at 274–566 is dehydrogenase domain; the sequence is RNIKASQLKF…ASAVYVRARF (293 aa). NAD(+) contacts are provided by residues 284 to 298 and lysine 518; that span reads GFLG…IVKN.

This sequence belongs to the HIBADH-related family. NP60 subfamily. In terms of assembly, binds to mononucleosomes. Interacts with male-specific lethal (MSL) histone acetyltransferase complex at least composed of mof, msl-1, msl-2 and msl-3.

The protein resides in the chromosome. Functionally, may have oxidoreductase activity. The polypeptide is Cytokine-like nuclear factor N-PAC (Anopheles gambiae (African malaria mosquito)).